The following is a 405-amino-acid chain: Arginine biosynthesis bifunctional protein ArgJ (405 aa).

Positions 152, 178, 189, 276, 400, and 405 each coordinate substrate. Thr189 serves as the catalytic Nucleophile.

The protein belongs to the ArgJ family. As to quaternary structure, heterotetramer of two alpha and two beta chains.

The protein localises to the cytoplasm. The catalysed reaction is N(2)-acetyl-L-ornithine + L-glutamate = N-acetyl-L-glutamate + L-ornithine. It catalyses the reaction L-glutamate + acetyl-CoA = N-acetyl-L-glutamate + CoA + H(+). Its pathway is amino-acid biosynthesis; L-arginine biosynthesis; L-ornithine and N-acetyl-L-glutamate from L-glutamate and N(2)-acetyl-L-ornithine (cyclic): step 1/1. The protein operates within amino-acid biosynthesis; L-arginine biosynthesis; N(2)-acetyl-L-ornithine from L-glutamate: step 1/4. Functionally, catalyzes two activities which are involved in the cyclic version of arginine biosynthesis: the synthesis of N-acetylglutamate from glutamate and acetyl-CoA as the acetyl donor, and of ornithine by transacetylation between N(2)-acetylornithine and glutamate. The chain is Arginine biosynthesis bifunctional protein ArgJ from Pseudomonas syringae pv. tomato (strain ATCC BAA-871 / DC3000).